The primary structure comprises 668 residues: L-type lectin-domain containing receptor kinase I.7 (668 aa).

Positions 1–21 (MIRGLLLGIIWMIFCVCSSFQ) are cleaved as a signal peptide. At 22 to 285 (QETPFVYNNF…SSTKKKSTSP (264 aa)) the chain is on the extracellular side. The tract at residues 24–256 (TPFVYNNFGH…YQYILGWSFS (233 aa)) is legume-lectin like. 5 N-linked (GlcNAc...) asparagine glycosylation sites follow: asparagine 56, asparagine 125, asparagine 167, asparagine 201, and asparagine 223. Residues 286–306 (VLSVLLGLIAFIVLGILVVAY) form a helical membrane-spanning segment. Residues 307-668 (LYRRNLYSEV…THSVLYGSGR (362 aa)) lie on the Cytoplasmic side of the membrane. The Protein kinase domain occupies 341 to 620 (FNRSEFLGRG…LNGNLALPEF (280 aa)). ATP contacts are provided by residues 347–355 (LGRGGFGEV) and lysine 372. Aspartate 468 (proton acceptor) is an active-site residue.

It in the C-terminal section; belongs to the protein kinase superfamily. Ser/Thr protein kinase family. The protein in the N-terminal section; belongs to the leguminous lectin family.

The protein localises to the cell membrane. It catalyses the reaction L-seryl-[protein] + ATP = O-phospho-L-seryl-[protein] + ADP + H(+). The catalysed reaction is L-threonyl-[protein] + ATP = O-phospho-L-threonyl-[protein] + ADP + H(+). In terms of biological role, involved in resistance response to the pathogenic oomycetes Phytophthora infestans and Phytophthora capsici. The polypeptide is L-type lectin-domain containing receptor kinase I.7 (Arabidopsis thaliana (Mouse-ear cress)).